A 534-amino-acid chain; its full sequence is MTVLCRLRHCHLSTPTLCRRFHDARVYKEDKRWPGWQVVVGIETHAQIKSRRKLFSGKITGTNPDEPPNKHVSPFDAAFPGTLPKLNSKCVDLAIRTALALKSDIQHRSSFDRKHYFYSDLPSGYQITQQYAPIALRGQLNIQMPNSSAVPVRIKQIQLEQDTAKSTLNPRKRISNIDLNRAGAGLMEIVSEPDLRSPEEAGMFVRTLQAVLRAIGASDGNMEQGSLRCDVNVSVNRVGRPPGTRCEIKNLNSVKFMMAAITHEIIRQRAILESASDLETCTVPQETRGFDENTFETYRLRSKEDAPDYRYMPDPNLGVLVLSQDRVQAIRDSLPELPWETRHRLREMYALSERDIDVLLSVDSGREVTFDGEKDVDGSGAVAMTHELLGQLSARKETFTDNSLTSDHLGELIDLVQNGTITGTSGKYLLRHMLAKPSSLRPAQITQQLRLTSLSSFSSSGHSNPTSTTDQELTTLCQAAITALPNEVAAVRAGNKNVMNKIVGRVMRESRGRADAKGVKALVEELILGGGDKS.

The N-terminal 28 residues, 1 to 28, are a transit peptide targeting the mitochondrion; the sequence is MTVLCRLRHCHLSTPTLCRRFHDARVYK.

It belongs to the GatB/GatE family. GatB subfamily. In terms of assembly, subunit of the heterotrimeric GatCAB amidotransferase (AdT) complex, composed of A, B and C subunits.

It is found in the mitochondrion. It catalyses the reaction L-glutamyl-tRNA(Gln) + L-glutamine + ATP + H2O = L-glutaminyl-tRNA(Gln) + L-glutamate + ADP + phosphate + H(+). Allows the formation of correctly charged Gln-tRNA(Gln) through the transamidation of misacylated Glu-tRNA(Gln) in the mitochondria. The reaction takes place in the presence of glutamine and ATP through an activated gamma-phospho-Glu-tRNA(Gln). In Laccaria bicolor (strain S238N-H82 / ATCC MYA-4686) (Bicoloured deceiver), this protein is Glutamyl-tRNA(Gln) amidotransferase subunit B, mitochondrial.